The following is a 98-amino-acid chain: MQFFTTVVLFAAAAMALPGGQQSRPYDPCPNNLLSVPQCCDTDALGLVGLGCVAPPNNRPASPRAFADCCHASSRRPKCCAVTTGLEASVLCDDPAGF.

The N-terminal stretch at 1 to 16 (MQFFTTVVLFAAAAMA) is a signal peptide. Disulfide bonds link C29/C79, C39/C70, C40/C52, and C80/C92.

Belongs to the cerato-ulmin hydrophobin family. In terms of assembly, homodimer. Homodimers further self-assemble to form highly ordered films at water-air interfaces through intermolecular interactions. As to expression, expressed in mycelium, conidiating mycelium and aerial hyphae.

It localises to the secreted. It is found in the cell wall. Functionally, aerial growth, conidiation, and dispersal of filamentous fungi in the environment rely upon a capability of their secreting small amphipathic proteins called hydrophobins (HPBs) with low sequence identity. Class I can self-assemble into an outermost layer of rodlet bundles on aerial cell surfaces, conferring cellular hydrophobicity that supports fungal growth, development and dispersal; whereas Class II form highly ordered films at water-air interfaces through intermolecular interactions but contribute nothing to the rodlet structure. Hyd1 is a class II hydrophobin that plays probably a role during conidiophore development and in intraspecific signaling or hyphal fusion. Hyd1 and Hyd3 are jointly required for conidial hydrophobicity and dispersal, but seem not to be involved in mycelia hydrophobicity. Inhibits conidial germination in environments not suitable for mycelial growth. Not necessary for root adhesion and colonization. The chain is Class II hydrophobin 1 from Bionectria ochroleuca (Gliocladium roseum).